Reading from the N-terminus, the 440-residue chain is UDP-N-acetylmuramoylalanine--D-glutamate ligase (440 aa).

112-118 provides a ligand contact to ATP; it reads GSNGKST.

Belongs to the MurCDEF family.

It localises to the cytoplasm. The catalysed reaction is UDP-N-acetyl-alpha-D-muramoyl-L-alanine + D-glutamate + ATP = UDP-N-acetyl-alpha-D-muramoyl-L-alanyl-D-glutamate + ADP + phosphate + H(+). The protein operates within cell wall biogenesis; peptidoglycan biosynthesis. Its function is as follows. Cell wall formation. Catalyzes the addition of glutamate to the nucleotide precursor UDP-N-acetylmuramoyl-L-alanine (UMA). The sequence is that of UDP-N-acetylmuramoylalanine--D-glutamate ligase from Blochmanniella pennsylvanica (strain BPEN).